The chain runs to 179 residues: Large ribosomal subunit protein uL6 (179 aa).

This sequence belongs to the universal ribosomal protein uL6 family. Part of the 50S ribosomal subunit.

Functionally, this protein binds to the 23S rRNA, and is important in its secondary structure. It is located near the subunit interface in the base of the L7/L12 stalk, and near the tRNA binding site of the peptidyltransferase center. In Synechococcus sp. (strain RCC307), this protein is Large ribosomal subunit protein uL6.